We begin with the raw amino-acid sequence, 256 residues long: Enkurin (256 aa).

Positions 83-89 (PKKPAVP) match the SH3-binding motif. The Enkurin domain maps to 160–252 (KRNEEIKKAQ…IIEKHKIIYI (93 aa)). The interval 160–255 (KRNEEIKKAQ…KHKIIYIANN (96 aa)) is interaction with TRPC proteins. The 12-residue stretch at 176 to 187 (IQENLKKAAMKR) folds into the IQ domain.

As to quaternary structure, microtubule inner protein component of sperm flagellar doublet microtubules. Binds calmodulin via its IQ domain. Interacts with TRPC1, TRPC2, TRPC5, but not TRPC3. Interacts with CFAP45. Expressed in airway epithelial cells.

It is found in the cytoplasm. The protein localises to the cytoskeleton. Its subcellular location is the cilium axoneme. It localises to the flagellum axoneme. Adapter that functions to localize a calcium-sensitive signal transduction machinery in sperm to a calcium-permeable ion channel. Microtubule inner protein (MIP) part of the dynein-decorated doublet microtubules (DMTs) in cilia axoneme, which is required for motile cilia beating. This chain is Enkurin, found in Homo sapiens (Human).